Reading from the N-terminus, the 162-residue chain is HTH-type transcriptional regulator IscR (162 aa).

The region spanning 2 to 131 (RLTSKGRYAV…NNITLGELVN (130 aa)) is the HTH rrf2-type domain. The segment at residues 28–51 (LADISERQGISLSYLEQLFSRLRK) is a DNA-binding region (H-T-H motif). 3 residues coordinate [2Fe-2S] cluster: Cys92, Cys98, and Cys104. A disordered region spans residues 140 to 162 (GRQHTHDAPRTRTQDAIDVKLRA). Over residues 143 to 162 (HTHDAPRTRTQDAIDVKLRA) the composition is skewed to basic and acidic residues.

Requires [2Fe-2S] cluster as cofactor.

In terms of biological role, regulates the transcription of several operons and genes involved in the biogenesis of Fe-S clusters and Fe-S-containing proteins. In Shigella flexneri, this protein is HTH-type transcriptional regulator IscR.